Here is a 759-residue protein sequence, read N- to C-terminus: Hormone-sensitive lipase (759 aa).

The Involved in the stabilization of the negatively charged intermediate by the formation of the oxyanion hole motif lies at 349–351 (HGG). The active site involves Ser-423. Positions 534–553 (GRKPQKTTSPTAESVRPTES) are disordered. Position 557 is a phosphoserine (Ser-557). Ser-559 carries the post-translational modification Phosphoserine; by AMPK. Thr-574 carries the phosphothreonine modification. Positions 583 to 604 (LSNSEPSDSPEMSQSMETLGPS) are disordered. Polar residues predominate over residues 585–604 (NSEPSDSPEMSQSMETLGPS). Ser-597, Ser-618, Ser-650, and Ser-651 each carry phosphoserine. Catalysis depends on residues Asp-694 and His-724.

It belongs to the 'GDXG' lipolytic enzyme family. As to quaternary structure, monomer and homodimer. Interacts with CAVIN1 in the adipocyte cytoplasm. Interacts with PLIN5. Phosphorylation by AMPK reduces its translocation towards the lipid droplets.

It localises to the cell membrane. The protein localises to the membrane. It is found in the caveola. The protein resides in the cytoplasm. Its subcellular location is the cytosol. It localises to the lipid droplet. The catalysed reaction is a diacylglycerol + H2O = a monoacylglycerol + a fatty acid + H(+). It carries out the reaction a triacylglycerol + H2O = a diacylglycerol + a fatty acid + H(+). It catalyses the reaction a monoacylglycerol + H2O = glycerol + a fatty acid + H(+). The enzyme catalyses Hydrolyzes glycerol monoesters of long-chain fatty acids.. The catalysed reaction is cholesteryl (9Z-octadecenoate) + H2O = cholesterol + (9Z)-octadecenoate + H(+). It carries out the reaction all-trans-retinyl hexadecanoate + H2O = all-trans-retinol + hexadecanoate + H(+). It catalyses the reaction 1,2-di-(9Z-octadecenoyl)-glycerol + H2O = (9Z-octadecenoyl)-glycerol + (9Z)-octadecenoate + H(+). The enzyme catalyses 2-(5Z,8Z,11Z,14Z-eicosatetraenoyl)-glycerol + H2O = glycerol + (5Z,8Z,11Z,14Z)-eicosatetraenoate + H(+). The catalysed reaction is 1-(9Z-octadecenoyl)-glycerol + H2O = glycerol + (9Z)-octadecenoate + H(+). It carries out the reaction 2-(9Z-octadecenoyl)-glycerol + H2O = glycerol + (9Z)-octadecenoate + H(+). It catalyses the reaction 1-O-hexadecyl-2-acetyl-sn-glycerol + H2O = 1-O-hexadecyl-sn-glycerol + acetate + H(+). The enzyme catalyses 1,2-di-(9Z-octadecenoyl)-sn-glycerol + H2O = (9Z-octadecenoyl)-glycerol + (9Z)-octadecenoate + H(+). The catalysed reaction is 1,3-di-(9Z-octadecenoyl)-glycerol + H2O = 1-(9Z-octadecenoyl)-glycerol + (9Z)-octadecenoate + H(+). It carries out the reaction 1,2-di-(9Z-octadecenoyl)-glycerol + (9Z)-octadecenoate + H(+) = 1,2,3-tri-(9Z-octadecenoyl)-glycerol + H2O. It catalyses the reaction 2,3-di-(9Z)-octadecenoyl-sn-glycerol + H2O = 2-(9Z-octadecenoyl)-glycerol + (9Z)-octadecenoate + H(+). The enzyme catalyses 1,2,3-tri-(9Z-octadecenoyl)-glycerol + H2O = di-(9Z)-octadecenoylglycerol + (9Z)-octadecenoate + H(+). The catalysed reaction is 1,2-di-(9Z-octadecenoyl)-glycerol + H2O = 2-(9Z-octadecenoyl)-glycerol + (9Z)-octadecenoate + H(+). The protein operates within glycerolipid metabolism; triacylglycerol degradation. Its function is as follows. Lipase with broad substrate specificity, catalyzing the hydrolysis of triacylglycerols (TAGs), diacylglycerols (DAGs), monoacylglycerols (MAGs), cholesteryl esters and retinyl esters. Shows a preferential hydrolysis of DAGs over TAGs and MAGs and of the fatty acid (FA) esters at the sn-1 and sn-2 positions of the glycerol backbone in TAGs. Preferentially hydrolyzes FA esters at the sn-3 position of the glycerol backbone in DAGs. Catalyzes the hydrolysis of 2-arachidonoylglycerol, an endocannabinoid and of 2-acetyl monoalkylglycerol ether, the penultimate precursor of the pathway for de novo synthesis of platelet-activating factor. In adipose tissue and heart, it primarily hydrolyzes stored triglycerides to free fatty acids, while in steroidogenic tissues, it principally converts cholesteryl esters to free cholesterol for steroid hormone production. In Mus musculus (Mouse), this protein is Hormone-sensitive lipase (Lipe).